An 81-amino-acid polypeptide reads, in one-letter code: Omega-conotoxin-like TxMKLT1-0223 (81 aa).

The signal sequence occupies residues 1–22; that stretch reads MKLTCMMIVAVLFLTAWTFVTA. The propeptide occupies 23–52; that stretch reads VPHSSNALENLYLKARHEMENPEASKLNTR. 3 disulfide bridges follow: C55–C72, C62–C76, and C71–C80.

It belongs to the conotoxin O1 superfamily. Expressed by the venom duct.

It localises to the secreted. Omega-conotoxins act at presynaptic membranes, they bind and block voltage-gated calcium channels (Cav). This Conus textile (Cloth-of-gold cone) protein is Omega-conotoxin-like TxMKLT1-0223.